We begin with the raw amino-acid sequence, 192 residues long: Superoxide dismutase [Fe] (192 aa).

Fe cation contacts are provided by H27, H74, D157, and H161.

It belongs to the iron/manganese superoxide dismutase family. As to quaternary structure, homodimer. Fe cation serves as cofactor.

It catalyses the reaction 2 superoxide + 2 H(+) = H2O2 + O2. Destroys superoxide anion radicals which are normally produced within the cells and which are toxic to biological systems. The protein is Superoxide dismutase [Fe] (sodB) of Legionella pneumophila subsp. pneumophila (strain Philadelphia 1 / ATCC 33152 / DSM 7513).